The primary structure comprises 138 residues: 18 kDa antigen 2 (138 aa).

The 111-residue stretch at 21–131 (GTRRPAVMPM…KPRRIEINHN (111 aa)) folds into the sHSP domain.

It belongs to the small heat shock protein (HSP20) family.

Functionally, not known. This protein is one of the major immune reactive proteins in mycobacteria. In Mycobacterium avium, this protein is 18 kDa antigen 2.